The primary structure comprises 100 residues: Urease subunit gamma (100 aa).

The protein belongs to the urease gamma subunit family. In terms of assembly, heterotrimer of UreA (gamma), UreB (beta) and UreC (alpha) subunits. Three heterotrimers associate to form the active enzyme.

The protein localises to the cytoplasm. It catalyses the reaction urea + 2 H2O + H(+) = hydrogencarbonate + 2 NH4(+). Its pathway is nitrogen metabolism; urea degradation; CO(2) and NH(3) from urea (urease route): step 1/1. This chain is Urease subunit gamma, found in Paracidovorax citrulli (strain AAC00-1) (Acidovorax citrulli).